The chain runs to 819 residues: Leucine--tRNA ligase (819 aa).

Residues 40-51 (PYPSGAGLHVGH) carry the 'HIGH' region motif. The short motif at 600 to 604 (KMSKS) is the 'KMSKS' region element. Lysine 603 lines the ATP pocket.

It belongs to the class-I aminoacyl-tRNA synthetase family.

It localises to the cytoplasm. It carries out the reaction tRNA(Leu) + L-leucine + ATP = L-leucyl-tRNA(Leu) + AMP + diphosphate. This Chlamydia trachomatis serovar L2 (strain ATCC VR-902B / DSM 19102 / 434/Bu) protein is Leucine--tRNA ligase.